A 280-amino-acid polypeptide reads, in one-letter code: Small ribosomal subunit protein uS3 (280 aa).

Residues 38–106 (IRKLLATGLE…QVQLNILEVK (69 aa)) form the KH type-2 domain. Residues 216–280 (AAAPAADRPR…SAGQPETTES (65 aa)) form a disordered region. Positions 237–270 (SGASGTTATSTDAGRAASEGTVEAPATEAAATAP) are enriched in low complexity.

It belongs to the universal ribosomal protein uS3 family. As to quaternary structure, part of the 30S ribosomal subunit. Forms a tight complex with proteins S10 and S14.

In terms of biological role, binds the lower part of the 30S subunit head. Binds mRNA in the 70S ribosome, positioning it for translation. The protein is Small ribosomal subunit protein uS3 of Mycolicibacterium vanbaalenii (strain DSM 7251 / JCM 13017 / BCRC 16820 / KCTC 9966 / NRRL B-24157 / PYR-1) (Mycobacterium vanbaalenii).